The sequence spans 469 residues: Argininosuccinate lyase (469 aa).

It belongs to the lyase 1 family. Argininosuccinate lyase subfamily.

The protein resides in the cytoplasm. The catalysed reaction is 2-(N(omega)-L-arginino)succinate = fumarate + L-arginine. It functions in the pathway amino-acid biosynthesis; L-arginine biosynthesis; L-arginine from L-ornithine and carbamoyl phosphate: step 3/3. The sequence is that of Argininosuccinate lyase from Burkholderia vietnamiensis (strain G4 / LMG 22486) (Burkholderia cepacia (strain R1808)).